A 147-amino-acid chain; its full sequence is Ribonuclease P protein component (147 aa).

Residues 117-147 (TRPRGQSSHRTRASREATSAHTTAVGEQPTQ) are disordered.

Belongs to the RnpA family. Consists of a catalytic RNA component (M1 or rnpB) and a protein subunit.

The enzyme catalyses Endonucleolytic cleavage of RNA, removing 5'-extranucleotides from tRNA precursor.. RNaseP catalyzes the removal of the 5'-leader sequence from pre-tRNA to produce the mature 5'-terminus. It can also cleave other RNA substrates such as 4.5S RNA. The protein component plays an auxiliary but essential role in vivo by binding to the 5'-leader sequence and broadening the substrate specificity of the ribozyme. The polypeptide is Ribonuclease P protein component (Thermobifida fusca (strain YX)).